Consider the following 72-residue polypeptide: Conotoxin VnMKLT2-021 (72 aa).

Residues 1–22 (MKLTCVLIVAVLFLTACQLTTA) form the signal peptide. The propeptide occupies 23–45 (ASYARSERQHPDLGSSDQNSKLT). 3 disulfides stabilise this stretch: Cys48–Cys62, Cys55–Cys66, and Cys61–Cys71.

This sequence belongs to the conotoxin O1 superfamily. In terms of tissue distribution, expressed by the venom duct.

The protein resides in the secreted. This chain is Conotoxin VnMKLT2-021, found in Conus ventricosus (Mediterranean cone).